The following is a 395-amino-acid chain: F-box only protein 7 (395 aa).

The F-box domain maps to 19-70; that stretch reads NHDWSKLCPDILRKIIESLSSLDFYRAKIVCSDWYSVWKTCVKRPLRPWRII.

The sequence is that of F-box only protein 7 (FBX7) from Arabidopsis thaliana (Mouse-ear cress).